Consider the following 301-residue polypeptide: Protein KTI12 homolog (301 aa).

8–15 (GQPCSGKS) serves as a coordination point for ATP. The segment at 262-275 (LRRTFIKLAGQYSL) is calmodulin-binding.

This sequence belongs to the KTI12 family. In terms of assembly, interacts with the elongator complex. Binds to calmodulin in a calcium-dependent manner.

Its subcellular location is the cytoplasm. It is found in the nucleus. Functionally, elongator complex-associated factor that is not a structural subunit but rather transiently contacts the complex. Regulates both meristem activity and organ growth; acts as a positive regulator of adaxial leaf patterning. Required for an early step in synthesis of 5-carbamoylmethyl (ncm5) groups present on uridines (ncm5U) at the wobble position in tRNA. In Oryza sativa subsp. indica (Rice), this protein is Protein KTI12 homolog.